Reading from the N-terminus, the 514-residue chain is tRNA-2-methylthio-N(6)-dimethylallyladenosine synthase (514 aa).

The disordered stretch occupies residues 1–21 (MNEEQRKASSVDVLAERDKKA). An MTTase N-terminal domain is found at 68-186 (RTFLIKTYGC…LPEILEEAYL (119 aa)). The [4Fe-4S] cluster site is built by C77, C113, C147, C223, C227, and C230. The region spanning 209-440 (REGNIKAWVN…KKVGHYSQIA (232 aa)) is the Radical SAM core domain. Positions 442-505 (SKYEGQTVTV…QYSLNGSFVK (64 aa)) constitute a TRAM domain.

Belongs to the methylthiotransferase family. MiaB subfamily. Monomer. [4Fe-4S] cluster is required as a cofactor.

The protein resides in the cytoplasm. The catalysed reaction is N(6)-dimethylallyladenosine(37) in tRNA + (sulfur carrier)-SH + AH2 + 2 S-adenosyl-L-methionine = 2-methylsulfanyl-N(6)-dimethylallyladenosine(37) in tRNA + (sulfur carrier)-H + 5'-deoxyadenosine + L-methionine + A + S-adenosyl-L-homocysteine + 2 H(+). In terms of biological role, catalyzes the methylthiolation of N6-(dimethylallyl)adenosine (i(6)A), leading to the formation of 2-methylthio-N6-(dimethylallyl)adenosine (ms(2)i(6)A) at position 37 in tRNAs that read codons beginning with uridine. The sequence is that of tRNA-2-methylthio-N(6)-dimethylallyladenosine synthase from Staphylococcus aureus (strain MRSA252).